We begin with the raw amino-acid sequence, 358 residues long: MYNRQLILEDGTVYKGYAFGADVENVGEVVFNTSMTGYQEILSDPSYNGQIVTLTYPLIGNYGINRDDFESMKPCIKGMVVKEVCATPSNFRSEKTLDEALKDFGIPGIYGIDTRALTRKLRSKGVVKGCLVSIDRNVDEVVAELKKTVLPTNQIEQVSSKSISPALGRGRRVVLVDLGMKIGIVRELVSRGCDVIVVPYNTTAEEVLRLEPDGVMLTNGPGDPEDAKESIEMIKGIINKVTIFGICMGHQLVSLACGAKTYKLKFGHRGGNHPVKNILTGRVDITSQNHGYAVDIDSLNDTDLELTHIAINDRSCEGVRHKKYPVFTVQFHPEAAAGPHDTSYLFDEFIKNIDNNMK.

CPSase regions lie at residues 1 to 168 and 1 to 171; these read MYNR…PALG and MYNR…GRGR. Residues S46, G220, and G222 each contribute to the L-glutamine site. A Glutamine amidotransferase type-1 domain is found at 172–358; sequence RVVLVDLGMK…FIKNIDNNMK (187 aa). C247 functions as the Nucleophile in the catalytic mechanism. Positions 248, 251, 289, 291, and 292 each coordinate L-glutamine. Catalysis depends on residues H332 and E334.

Belongs to the CarA family. As to quaternary structure, composed of two chains; the small (or glutamine) chain promotes the hydrolysis of glutamine to ammonia, which is used by the large (or ammonia) chain to synthesize carbamoyl phosphate. Tetramer of heterodimers (alpha,beta)4.

The enzyme catalyses hydrogencarbonate + L-glutamine + 2 ATP + H2O = carbamoyl phosphate + L-glutamate + 2 ADP + phosphate + 2 H(+). It catalyses the reaction L-glutamine + H2O = L-glutamate + NH4(+). The protein operates within amino-acid biosynthesis; L-arginine biosynthesis; carbamoyl phosphate from bicarbonate: step 1/1. It functions in the pathway pyrimidine metabolism; UMP biosynthesis via de novo pathway; (S)-dihydroorotate from bicarbonate: step 1/3. Its function is as follows. Small subunit of the glutamine-dependent carbamoyl phosphate synthetase (CPSase). CPSase catalyzes the formation of carbamoyl phosphate from the ammonia moiety of glutamine, carbonate, and phosphate donated by ATP, constituting the first step of 2 biosynthetic pathways, one leading to arginine and/or urea and the other to pyrimidine nucleotides. The small subunit (glutamine amidotransferase) binds and cleaves glutamine to supply the large subunit with the substrate ammonia. In Fusobacterium nucleatum subsp. nucleatum (strain ATCC 25586 / DSM 15643 / BCRC 10681 / CIP 101130 / JCM 8532 / KCTC 2640 / LMG 13131 / VPI 4355), this protein is Carbamoyl phosphate synthase small chain.